The chain runs to 208 residues: Small ribosomal subunit protein uS4 (208 aa).

The S4 RNA-binding domain occupies 98-159; sequence RRLDNVAYRL…KSRKVAAISE (62 aa).

Belongs to the universal ribosomal protein uS4 family. As to quaternary structure, part of the 30S ribosomal subunit. Contacts protein S5. The interaction surface between S4 and S5 is involved in control of translational fidelity.

Functionally, one of the primary rRNA binding proteins, it binds directly to 16S rRNA where it nucleates assembly of the body of the 30S subunit. Its function is as follows. With S5 and S12 plays an important role in translational accuracy. This Geobacter sp. (strain M21) protein is Small ribosomal subunit protein uS4.